The sequence spans 587 residues: Aspartate--tRNA ligase (587 aa).

Residue glutamate 174 participates in L-aspartate binding. Positions 198 to 201 are aspartate; that stretch reads QTFK. Arginine 220 serves as a coordination point for L-aspartate. Residues 220–222 and glutamine 229 contribute to the ATP site; that span reads RDE. Histidine 447 provides a ligand contact to L-aspartate. Glutamate 481 is an ATP binding site. L-aspartate is bound at residue arginine 488. 533 to 536 is an ATP binding site; that stretch reads GLDR.

The protein belongs to the class-II aminoacyl-tRNA synthetase family. Type 1 subfamily. In terms of assembly, homodimer.

Its subcellular location is the cytoplasm. The catalysed reaction is tRNA(Asp) + L-aspartate + ATP = L-aspartyl-tRNA(Asp) + AMP + diphosphate. In terms of biological role, catalyzes the attachment of L-aspartate to tRNA(Asp) in a two-step reaction: L-aspartate is first activated by ATP to form Asp-AMP and then transferred to the acceptor end of tRNA(Asp). The chain is Aspartate--tRNA ligase from Porphyromonas gingivalis (strain ATCC BAA-308 / W83).